An 880-amino-acid polypeptide reads, in one-letter code: Alanine--tRNA ligase (880 aa).

4 residues coordinate Zn(2+): His566, His570, Cys668, and His672.

The protein belongs to the class-II aminoacyl-tRNA synthetase family. Zn(2+) is required as a cofactor.

The protein resides in the cytoplasm. The catalysed reaction is tRNA(Ala) + L-alanine + ATP = L-alanyl-tRNA(Ala) + AMP + diphosphate. Its function is as follows. Catalyzes the attachment of alanine to tRNA(Ala) in a two-step reaction: alanine is first activated by ATP to form Ala-AMP and then transferred to the acceptor end of tRNA(Ala). Also edits incorrectly charged Ser-tRNA(Ala) and Gly-tRNA(Ala) via its editing domain. This chain is Alanine--tRNA ligase, found in Trichormus variabilis (strain ATCC 29413 / PCC 7937) (Anabaena variabilis).